A 167-amino-acid polypeptide reads, in one-letter code: MLIVVNDSPFYKGDTAILRQLVGGDRISCKLKHANVRHEFSYSGWVLIVGNEYLGMSETSGALARRMIVFPARNAVHLKKFLIKEEHGLFMGPLAEEISEIAKWALSMPDQDATEIMRDPEIHCPSLSEENKLCRENLNHISACLMKTPCSSSKPSQGICHAHDPIS.

Its subcellular location is the mitochondrion. This is an uncharacterized protein from Marchantia polymorpha (Common liverwort).